The sequence spans 391 residues: Processive diacylglycerol beta-glucosyltransferase (391 aa).

It belongs to the glycosyltransferase 28 family. UgtP subfamily.

The protein localises to the cell membrane. It catalyses the reaction a 1,2-diacyl-3-O-(beta-D-glucopyranosyl)-sn-glycerol + UDP-alpha-D-glucose = a 1,2-diacyl-3-O-(beta-D-Glc-(1-&gt;6)-beta-D-Glc)-sn-glycerol + UDP + H(+). The catalysed reaction is a 1,2-diacyl-sn-glycerol + UDP-alpha-D-glucose = a 1,2-diacyl-3-O-(beta-D-glucopyranosyl)-sn-glycerol + UDP + H(+). The protein operates within glycolipid metabolism; diglucosyl-diacylglycerol biosynthesis. Processive glucosyltransferase involved in the biosynthesis of both the bilayer- and non-bilayer-forming membrane glucolipids. Is able to successively transfer two glucosyl residues to diacylglycerol (DAG), thereby catalyzing the formation of beta-monoglucosyl-DAG (3-O-(beta-D-glucopyranosyl)-1,2-diacyl-sn-glycerol) and beta-diglucosyl-DAG (3-O-(beta-D-glucopyranosyl-beta-(1-&gt;6)-D-glucopyranosyl)-1,2-diacyl-sn-glycerol). Beta-diglucosyl-DAG is the predominant glycolipid found in Bacillales and is also used as a membrane anchor for lipoteichoic acid (LTA). This is Processive diacylglycerol beta-glucosyltransferase from Staphylococcus epidermidis (strain ATCC 12228 / FDA PCI 1200).